We begin with the raw amino-acid sequence, 315 residues long: Glutathione synthetase (315 aa).

One can recognise an ATP-grasp domain in the interval 125–310 (KLYTAWFADL…ITGMLMDAIE (186 aa)). 151-207 (WEKHGDIIMKPLDGMGGASIFRVKEGDPNIGVIAETLTELGNRYCMAQNYLPAIKDG) contributes to the ATP binding site. The Mg(2+) site is built by Glu281 and Asn283.

This sequence belongs to the prokaryotic GSH synthase family. The cofactor is Mg(2+). It depends on Mn(2+) as a cofactor.

It catalyses the reaction gamma-L-glutamyl-L-cysteine + glycine + ATP = glutathione + ADP + phosphate + H(+). The protein operates within sulfur metabolism; glutathione biosynthesis; glutathione from L-cysteine and L-glutamate: step 2/2. In Salmonella typhi, this protein is Glutathione synthetase.